Reading from the N-terminus, the 413-residue chain is Serine hydroxymethyltransferase (413 aa).

Residues Leu-119 and 123 to 125 contribute to the (6S)-5,6,7,8-tetrahydrofolate site; that span reads GHL. At Lys-228 the chain carries N6-(pyridoxal phosphate)lysine.

It belongs to the SHMT family. In terms of assembly, homodimer. Pyridoxal 5'-phosphate serves as cofactor.

The protein resides in the cytoplasm. It catalyses the reaction (6R)-5,10-methylene-5,6,7,8-tetrahydrofolate + glycine + H2O = (6S)-5,6,7,8-tetrahydrofolate + L-serine. The protein operates within one-carbon metabolism; tetrahydrofolate interconversion. Its pathway is amino-acid biosynthesis; glycine biosynthesis; glycine from L-serine: step 1/1. Functionally, catalyzes the reversible interconversion of serine and glycine with tetrahydrofolate (THF) serving as the one-carbon carrier. This reaction serves as the major source of one-carbon groups required for the biosynthesis of purines, thymidylate, methionine, and other important biomolecules. Also exhibits THF-independent aldolase activity toward beta-hydroxyamino acids, producing glycine and aldehydes, via a retro-aldol mechanism. The polypeptide is Serine hydroxymethyltransferase (Caldanaerobacter subterraneus subsp. tengcongensis (strain DSM 15242 / JCM 11007 / NBRC 100824 / MB4) (Thermoanaerobacter tengcongensis)).